The chain runs to 165 residues: MRLLVVAIGRLKNGPERDLAARYRERAVALGKSLGVTACDLTEIPESRARRAADRVAEEAAAILALVPADAAVIACDERGRSDWPSERIAEKIGGWRDAGRGSLVLVIGGADGLHESVRGRADHILAFGAATLPHGLVRVLALEQVYRALTILAGHPYHRGDPEA.

Gly-109 is a binding site for S-adenosyl-L-methionine.

This sequence belongs to the RNA methyltransferase RlmH family. In terms of assembly, homodimer.

It localises to the cytoplasm. The catalysed reaction is pseudouridine(1915) in 23S rRNA + S-adenosyl-L-methionine = N(3)-methylpseudouridine(1915) in 23S rRNA + S-adenosyl-L-homocysteine + H(+). Functionally, specifically methylates the pseudouridine at position 1915 (m3Psi1915) in 23S rRNA. This Methylorubrum populi (strain ATCC BAA-705 / NCIMB 13946 / BJ001) (Methylobacterium populi) protein is Ribosomal RNA large subunit methyltransferase H.